The sequence spans 89 residues: Small ribosomal subunit protein uS15 (89 aa).

It belongs to the universal ribosomal protein uS15 family. As to quaternary structure, part of the 30S ribosomal subunit. Forms a bridge to the 50S subunit in the 70S ribosome, contacting the 23S rRNA.

In terms of biological role, one of the primary rRNA binding proteins, it binds directly to 16S rRNA where it helps nucleate assembly of the platform of the 30S subunit by binding and bridging several RNA helices of the 16S rRNA. Functionally, forms an intersubunit bridge (bridge B4) with the 23S rRNA of the 50S subunit in the ribosome. The sequence is that of Small ribosomal subunit protein uS15 from Saccharophagus degradans (strain 2-40 / ATCC 43961 / DSM 17024).